The primary structure comprises 316 residues: Large ribosomal subunit protein uL10 (316 aa).

A disordered region spans residues 289–316 (AAAAAPAKEAPKEESEESDEDMGFGLFD).

This sequence belongs to the universal ribosomal protein uL10 family. As to quaternary structure, P0 forms a pentameric complex by interaction with dimers of P1 and P2. Phosphorylated.

Its subcellular location is the nucleus. It localises to the cytoplasm. In terms of biological role, ribosomal protein P0 is the functional equivalent of E.coli protein L10. This chain is Large ribosomal subunit protein uL10 (RPLP0), found in Gallus gallus (Chicken).